The following is a 207-amino-acid chain: Twist-related protein 1 (207 aa).

The span at 1-18 (MMQDVSSSPVSPADDSLS) shows a compositional bias: low complexity. The tract at residues 1-110 (MMQDVSSSPV…GGGSPQSYEE (110 aa)) is disordered. Over residues 34–43 (RGGRKRRSSR) the composition is skewed to basic residues. 2 stretches are compositionally biased toward gly residues: residues 46-65 (AGGG…GGDE) and 80-104 (GCGG…GGGS). In terms of domain architecture, bHLH spans 113–164 (TQRVMANVRERQRTQSLNEAFAALRKIIPTLPSDKLSKIQTLKLAARYIDFL). Positions 166–196 (QVLQSDELDSKMASCSYVAHERLSYAFSVWR) are sufficient for transactivation activity.

In terms of assembly, efficient DNA binding requires dimerization with another bHLH protein. Homodimer or heterodimer with E proteins such as TCF3. ID1 binds preferentially to TCF3 but does not interact efficiently with TWIST1 so ID1 levels control the amount of TCF3 available to dimerize with TWIST and thus determine the type of dimer formed.

It is found in the nucleus. Functionally, acts as a transcriptional regulator. Inhibits myogenesis by sequestrating E proteins, inhibiting trans-activation by MEF2, and inhibiting DNA-binding by MYOD1 through physical interaction. This interaction probably involves the basic domains of both proteins. Also represses expression of pro-inflammatory cytokines such as TNFA and IL1B. Regulates cranial suture patterning and fusion. Activates transcription as a heterodimer with E proteins. Regulates gene expression differentially, depending on dimer composition. Homodimers induce expression of FGFR2 and POSTN while heterodimers repress FGFR2 and POSTN expression and induce THBS1 expression. Heterodimerization is also required for osteoblast differentiation. Represses the activity of the circadian transcriptional activator: NPAS2-BMAL1 heterodimer. This Cebus capucinus (White-faced sapajou) protein is Twist-related protein 1 (TWIST1).